The primary structure comprises 229 residues: DNA mismatch repair protein MutH (229 aa).

Belongs to the MutH family.

The protein localises to the cytoplasm. In terms of biological role, sequence-specific endonuclease that cleaves unmethylated GATC sequences. It is involved in DNA mismatch repair. This chain is DNA mismatch repair protein MutH, found in Shigella dysenteriae serotype 1 (strain Sd197).